The following is a 21-amino-acid chain: Protein YadW (21 aa).

The chain is Protein YadW from Escherichia coli (strain K12).